Here is a 332-residue protein sequence, read N- to C-terminus: Anthranilate phosphoribosyltransferase (332 aa).

5-phospho-alpha-D-ribose 1-diphosphate-binding positions include Gly80, 83–84 (GD), Thr88, 90–93 (NLST), 108–116 (KHGNRSASG), and Ser120. Gly80 lines the anthranilate pocket. Residue Ser92 coordinates Mg(2+). Asn111 contacts anthranilate. An anthranilate-binding site is contributed by Arg166. Residues Asp224 and Glu225 each coordinate Mg(2+).

It belongs to the anthranilate phosphoribosyltransferase family. As to quaternary structure, homodimer. Mg(2+) serves as cofactor.

It carries out the reaction N-(5-phospho-beta-D-ribosyl)anthranilate + diphosphate = 5-phospho-alpha-D-ribose 1-diphosphate + anthranilate. It functions in the pathway amino-acid biosynthesis; L-tryptophan biosynthesis; L-tryptophan from chorismate: step 2/5. Catalyzes the transfer of the phosphoribosyl group of 5-phosphorylribose-1-pyrophosphate (PRPP) to anthranilate to yield N-(5'-phosphoribosyl)-anthranilate (PRA). The polypeptide is Anthranilate phosphoribosyltransferase (Pyrobaculum calidifontis (strain DSM 21063 / JCM 11548 / VA1)).